Reading from the N-terminus, the 432-residue chain is MSKIVKVIGREIIDSRGNPTVEAEVHLEGGFVGMAAAPSGASTGSREALELRDGDKSRFLGKGVTKAVAAVNGPIAQAILGKDAKDQAGIDKIMIDLDGTENKSNFGANAILAVSLANAKAAAASKGLPLYAHIAELNGTPGKYSMPVPMMNIINGGEHADNNVDIQEFMIQPVGAPTLKEAVRMGSEVFHHLAKVLKSKGMNTAVGDEGGYAPNLGSNAEALAVIAEAVKAAGYELGKDITLAMDCAASEFYKDGKYVLAGEGNKAFTSEEFTHFLEELTKQYPIVSIEDGLDESDWEGFAYQTKVLGDKIQLVGDDLFVTNTKILKEGIEKGIANSILIKFNQIGSLTETLAAIKMAKDAGYTAVISHRSGETEDATIADLAVGTAAGQIKTGSMSRSDRVAKYNQLIRIEEALGEQAPFNGRKEIKGQA.

Q167 provides a ligand contact to (2R)-2-phosphoglycerate. Catalysis depends on E209, which acts as the Proton donor. The Mg(2+) site is built by D246, E290, and D317. Positions 342, 371, 372, and 393 each coordinate (2R)-2-phosphoglycerate. The active-site Proton acceptor is K342.

The protein belongs to the enolase family. As to quaternary structure, component of the RNA degradosome, a multiprotein complex involved in RNA processing and mRNA degradation. The cofactor is Mg(2+).

The protein localises to the cytoplasm. It localises to the secreted. It is found in the cell surface. The enzyme catalyses (2R)-2-phosphoglycerate = phosphoenolpyruvate + H2O. It participates in carbohydrate degradation; glycolysis; pyruvate from D-glyceraldehyde 3-phosphate: step 4/5. In terms of biological role, catalyzes the reversible conversion of 2-phosphoglycerate (2-PG) into phosphoenolpyruvate (PEP). It is essential for the degradation of carbohydrates via glycolysis. This chain is Enolase, found in Klebsiella pneumoniae subsp. pneumoniae (strain ATCC 700721 / MGH 78578).